Consider the following 163-residue polypeptide: Cyclic pyranopterin monophosphate synthase (163 aa).

Residues 79 to 81 (LCH) and 117 to 118 (ME) each bind substrate. Asp-132 is a catalytic residue.

This sequence belongs to the MoaC family. In terms of assembly, homohexamer; trimer of dimers.

The catalysed reaction is (8S)-3',8-cyclo-7,8-dihydroguanosine 5'-triphosphate = cyclic pyranopterin phosphate + diphosphate. Its pathway is cofactor biosynthesis; molybdopterin biosynthesis. In terms of biological role, catalyzes the conversion of (8S)-3',8-cyclo-7,8-dihydroguanosine 5'-triphosphate to cyclic pyranopterin monophosphate (cPMP). The chain is Cyclic pyranopterin monophosphate synthase from Chloroflexus aurantiacus (strain ATCC 29366 / DSM 635 / J-10-fl).